The chain runs to 415 residues: Peptide chain release factor subunit 1-1 (415 aa).

The protein belongs to the eukaryotic release factor 1 family. Heterodimer of two subunits, one of which binds GTP.

It localises to the cytoplasm. Its function is as follows. Directs the termination of nascent peptide synthesis (translation) in response to the termination codons UAA, UAG and UGA. The polypeptide is Peptide chain release factor subunit 1-1 (Methanosarcina acetivorans (strain ATCC 35395 / DSM 2834 / JCM 12185 / C2A)).